The chain runs to 300 residues: GTPase Era (300 aa).

Residues 5-176 form the Era-type G domain; it reads HSGFVCLVGR…IDVLAAALPA (172 aa). The tract at residues 13–20 is G1; sequence GRPNTGKS. 13–20 contacts GTP; the sequence is GRPNTGKS. Residues 39–43 form a G2 region; sequence QTTRH. The G3 stretch occupies residues 60–63; sequence DTPG. Residues 60 to 64 and 125 to 128 each bind GTP; these read DTPGL and TKID. The tract at residues 125-128 is G4; that stretch reads TKID. The tract at residues 155–157 is G5; the sequence is VSA. Residues 207 to 286 enclose the KH type-2 domain; that stretch reads VRDELPHSLA…YLDLRVKVAK (80 aa).

This sequence belongs to the TRAFAC class TrmE-Era-EngA-EngB-Septin-like GTPase superfamily. Era GTPase family. In terms of assembly, monomer.

It is found in the cell envelope. It localises to the secreted. Its subcellular location is the cell wall. Its function is as follows. Exhibits GTPase activity. Binds RNA but is probably not involved in ribosome assembly in mycobacteria. In Mycobacterium bovis (strain ATCC BAA-935 / AF2122/97), this protein is GTPase Era.